The sequence spans 449 residues: Ribulose bisphosphate carboxylase large chain (449 aa).

Lys-5 bears the N6,N6,N6-trimethyllysine mark. Residues Asn-114 and Thr-164 each contribute to the substrate site. The active-site Proton acceptor is the Lys-166. Lys-168 is a substrate binding site. Mg(2+) contacts are provided by Lys-192, Asp-194, and Glu-195. Lys-192 is subject to N6-carboxylysine. His-285 (proton acceptor) is an active-site residue. Arg-286, His-318, and Ser-370 together coordinate substrate.

The protein belongs to the RuBisCO large chain family. Type I subfamily. Heterohexadecamer of 8 large chains and 8 small chains; disulfide-linked. The disulfide link is formed within the large subunit homodimers. Mg(2+) serves as cofactor. The disulfide bond which can form in the large chain dimeric partners within the hexadecamer appears to be associated with oxidative stress and protein turnover.

The protein localises to the plastid. The protein resides in the chloroplast. It catalyses the reaction 2 (2R)-3-phosphoglycerate + 2 H(+) = D-ribulose 1,5-bisphosphate + CO2 + H2O. The enzyme catalyses D-ribulose 1,5-bisphosphate + O2 = 2-phosphoglycolate + (2R)-3-phosphoglycerate + 2 H(+). In terms of biological role, ruBisCO catalyzes two reactions: the carboxylation of D-ribulose 1,5-bisphosphate, the primary event in carbon dioxide fixation, as well as the oxidative fragmentation of the pentose substrate in the photorespiration process. Both reactions occur simultaneously and in competition at the same active site. This is Ribulose bisphosphate carboxylase large chain from Zamioculcas zamiifolia (Aroid palm).